Reading from the N-terminus, the 237-residue chain is Ribonuclease PH (237 aa).

Phosphate-binding positions include arginine 86 and glycine 124–arginine 126.

Belongs to the RNase PH family. Homohexameric ring arranged as a trimer of dimers.

The enzyme catalyses tRNA(n+1) + phosphate = tRNA(n) + a ribonucleoside 5'-diphosphate. Functionally, phosphorolytic 3'-5' exoribonuclease that plays an important role in tRNA 3'-end maturation. Removes nucleotide residues following the 3'-CCA terminus of tRNAs; can also add nucleotides to the ends of RNA molecules by using nucleoside diphosphates as substrates, but this may not be physiologically important. Probably plays a role in initiation of 16S rRNA degradation (leading to ribosome degradation) during starvation. The protein is Ribonuclease PH of Cereibacter sphaeroides (strain KD131 / KCTC 12085) (Rhodobacter sphaeroides).